Consider the following 118-residue polypeptide: SPbeta prophage-derived uncharacterized protein YoqR (118 aa).

The sequence is that of SPbeta prophage-derived uncharacterized protein YoqR (yoqR) from Bacillus subtilis (strain 168).